The following is a 441-amino-acid chain: Rho-associated protein kinase 1 (441 aa).

A coiled-coil region spans residues 1-99 (NSKSQMDKDY…RLEQEVNEHK (99 aa)). The interval 114–353 (EAKSVAMCEM…TLSRLEETNS (240 aa)) is SHROOM3 binding. Residues 356–422 (TKDIELLRKE…LAEIMNRKDF (67 aa)) form the RhoBD domain. A coiled-coil region spans residues 418 to 441 (NRKDFKIDRKKANTQDLRKKKKKK).

The protein belongs to the protein kinase superfamily. AGC Ser/Thr protein kinase family. Homodimer. Interacts with RHOA (activated by GTP), RHOB, RHOC, GEM, MYLC2B, RHOE, PPP1R12A, LIMK1, LIMK2, TSG101, CHORDC1, DAPK3, PFN1, PTEN and JIP3. Interacts with FHOD1 in a Src-dependent manner. Interacts with ITGB1BP1 (via N-terminus and PTB domain). Interacts with SHROOM3. Mg(2+) is required as a cofactor.

It localises to the cytoplasm. It is found in the golgi apparatus membrane. Its subcellular location is the cytoskeleton. The protein resides in the microtubule organizing center. The protein localises to the centrosome. It localises to the centriole. It is found in the cell projection. Its subcellular location is the bleb. The protein resides in the cell membrane. The protein localises to the lamellipodium. It localises to the ruffle. The catalysed reaction is L-seryl-[protein] + ATP = O-phospho-L-seryl-[protein] + ADP + H(+). The enzyme catalyses L-threonyl-[protein] + ATP = O-phospho-L-threonyl-[protein] + ADP + H(+). Activated by RHOA binding. Inhibited by Y-27632. Functionally, protein kinase which is a key regulator of the actin cytoskeleton and cell polarity. Involved in regulation of smooth muscle contraction, actin cytoskeleton organization, stress fiber and focal adhesion formation, neurite retraction, cell adhesion and motility via phosphorylation of DAPK3, GFAP, LIMK1, LIMK2, MYL9/MLC2, TPPP, PFN1 and PPP1R12A. Phosphorylates FHOD1 and acts synergistically with it to promote SRC-dependent non-apoptotic plasma membrane blebbing. Phosphorylates JIP3 and regulates the recruitment of JNK to JIP3 upon UVB-induced stress. Acts as a suppressor of inflammatory cell migration by regulating PTEN phosphorylation and stability. Acts as a negative regulator of VEGF-induced angiogenic endothelial cell activation. Required for centrosome positioning and centrosome-dependent exit from mitosis. Plays a role in terminal erythroid differentiation. Inhibits podocyte motility via regulation of actin cytoskeletal dynamics and phosphorylation of CFL1. Promotes keratinocyte terminal differentiation. Involved in osteoblast compaction through the fibronectin fibrillogenesis cell-mediated matrix assembly process, essential for osteoblast mineralization. May regulate closure of the eyelids and ventral body wall by inducing the assembly of actomyosin bundles. The sequence is that of Rho-associated protein kinase 1 (ROCK1) from Bos taurus (Bovine).